Reading from the N-terminus, the 100-residue chain is Large ribosomal subunit protein bL21 (100 aa).

Belongs to the bacterial ribosomal protein bL21 family. Part of the 50S ribosomal subunit. Contacts protein L20.

In terms of biological role, this protein binds to 23S rRNA in the presence of protein L20. The chain is Large ribosomal subunit protein bL21 from Mycoplasma genitalium (strain ATCC 33530 / DSM 19775 / NCTC 10195 / G37) (Mycoplasmoides genitalium).